The chain runs to 530 residues: GMP synthase [glutamine-hydrolyzing] (530 aa).

Residues 4 to 205 (RILILDYGSQ…VKDICGCEGD (202 aa)) form the Glutamine amidotransferase type-1 domain. Catalysis depends on Cys84, which acts as the Nucleophile. Catalysis depends on residues His179 and Glu181. Residues 206 to 398 (WNMPDYISEA…LGLPPQMVYR (193 aa)) enclose the GMPS ATP-PPase domain. 233-239 (SGGVDSL) is an ATP binding site.

Homodimer.

It carries out the reaction XMP + L-glutamine + ATP + H2O = GMP + L-glutamate + AMP + diphosphate + 2 H(+). Its pathway is purine metabolism; GMP biosynthesis; GMP from XMP (L-Gln route): step 1/1. Functionally, catalyzes the synthesis of GMP from XMP. This chain is GMP synthase [glutamine-hydrolyzing], found in Bordetella parapertussis (strain 12822 / ATCC BAA-587 / NCTC 13253).